Reading from the N-terminus, the 94-residue chain is DNA-directed RNA polymerase subunit Rpo11 (94 aa).

This sequence belongs to the archaeal Rpo11/eukaryotic RPB11/RPC19 RNA polymerase subunit family. In terms of assembly, part of the RNA polymerase complex.

The protein resides in the cytoplasm. It catalyses the reaction RNA(n) + a ribonucleoside 5'-triphosphate = RNA(n+1) + diphosphate. Functionally, DNA-dependent RNA polymerase (RNAP) catalyzes the transcription of DNA into RNA using the four ribonucleoside triphosphates as substrates. The chain is DNA-directed RNA polymerase subunit Rpo11 from Haloarcula marismortui (strain ATCC 43049 / DSM 3752 / JCM 8966 / VKM B-1809) (Halobacterium marismortui).